The chain runs to 173 residues: Large ribosomal subunit protein bL9 (173 aa).

This sequence belongs to the bacterial ribosomal protein bL9 family.

Functionally, binds to the 23S rRNA. The sequence is that of Large ribosomal subunit protein bL9 from Rickettsia bellii (strain RML369-C).